The chain runs to 123 residues: Large ribosomal subunit protein bL12 (123 aa).

Belongs to the bacterial ribosomal protein bL12 family. In terms of assembly, homodimer. Part of the ribosomal stalk of the 50S ribosomal subunit. Forms a multimeric L10(L12)X complex, where L10 forms an elongated spine to which 2 to 4 L12 dimers bind in a sequential fashion. Binds GTP-bound translation factors.

In terms of biological role, forms part of the ribosomal stalk which helps the ribosome interact with GTP-bound translation factors. Is thus essential for accurate translation. The chain is Large ribosomal subunit protein bL12 from Bartonella bacilliformis (strain ATCC 35685 / KC583 / Herrer 020/F12,63).